A 410-amino-acid chain; its full sequence is Imidazolonepropionase (410 aa).

Fe(3+) is bound by residues histidine 71 and histidine 73. Positions 71 and 73 each coordinate Zn(2+). 4-imidazolone-5-propanoate is bound by residues arginine 80, tyrosine 143, and histidine 175. Residue tyrosine 143 participates in N-formimidoyl-L-glutamate binding. Position 235 (histidine 235) interacts with Fe(3+). Histidine 235 is a Zn(2+) binding site. Glutamate 238 is a binding site for 4-imidazolone-5-propanoate. Aspartate 309 contributes to the Fe(3+) binding site. Residue aspartate 309 coordinates Zn(2+).

The protein belongs to the metallo-dependent hydrolases superfamily. HutI family. The cofactor is Zn(2+). It depends on Fe(3+) as a cofactor.

It localises to the cytoplasm. It catalyses the reaction 4-imidazolone-5-propanoate + H2O = N-formimidoyl-L-glutamate. Its pathway is amino-acid degradation; L-histidine degradation into L-glutamate; N-formimidoyl-L-glutamate from L-histidine: step 3/3. Its function is as follows. Catalyzes the hydrolytic cleavage of the carbon-nitrogen bond in imidazolone-5-propanoate to yield N-formimidoyl-L-glutamate. It is the third step in the universal histidine degradation pathway. The protein is Imidazolonepropionase of Thermoplasma acidophilum (strain ATCC 25905 / DSM 1728 / JCM 9062 / NBRC 15155 / AMRC-C165).